The chain runs to 189 residues: Ornithine decarboxylase antizyme 2 (189 aa).

Residue Ser186 is modified to Phosphoserine.

Belongs to the ODC antizyme family. In terms of assembly, interacts with ODC1 and thereby sterically blocks ODC homodimerization. Interacts with AZIN2; this interaction disrupts the interaction between the antizyme and ODC1.

It is found in the nucleus. Its function is as follows. Ornithine decarboxylase (ODC) antizyme protein that negatively regulates ODC activity and intracellular polyamine biosynthesis and uptake in response to increased intracellular polyamine levels. Binds to ODC monomers, inhibiting the assembly of the functional ODC homodimers. Does not target the ODC monomers for degradation, which allows a protein synthesis-independent restoration of ODC activity. Involved in the translocation of AZIN2 from ER-Golgi intermediate compartment (ERGIC) to the cytosol. The protein is Ornithine decarboxylase antizyme 2 (OAZ2) of Homo sapiens (Human).